Consider the following 179-residue polypeptide: ADP-ribosylation factor-like protein 5A (179 aa).

Residue Gly2 is the site of N-myristoyl glycine attachment. Residues 23-30, 66-70, 125-128, and Ala159 contribute to the GTP site; these read GLDNAGKT, DIGGQ, and NKQD.

Belongs to the small GTPase superfamily. Arf family.

Its function is as follows. Lacks ADP-ribosylation enhancing activity. The polypeptide is ADP-ribosylation factor-like protein 5A (ARL5A) (Homo sapiens (Human)).